The primary structure comprises 272 residues: Putative pyruvate, phosphate dikinase regulatory protein (272 aa).

154-161 contributes to the ADP binding site; that stretch reads GVSRTSKS.

Belongs to the pyruvate, phosphate/water dikinase regulatory protein family. PDRP subfamily.

It carries out the reaction N(tele)-phospho-L-histidyl/L-threonyl-[pyruvate, phosphate dikinase] + ADP = N(tele)-phospho-L-histidyl/O-phospho-L-threonyl-[pyruvate, phosphate dikinase] + AMP + H(+). The catalysed reaction is N(tele)-phospho-L-histidyl/O-phospho-L-threonyl-[pyruvate, phosphate dikinase] + phosphate + H(+) = N(tele)-phospho-L-histidyl/L-threonyl-[pyruvate, phosphate dikinase] + diphosphate. In terms of biological role, bifunctional serine/threonine kinase and phosphorylase involved in the regulation of the pyruvate, phosphate dikinase (PPDK) by catalyzing its phosphorylation/dephosphorylation. The polypeptide is Putative pyruvate, phosphate dikinase regulatory protein (Wolbachia pipientis subsp. Culex pipiens (strain wPip)).